The primary structure comprises 279 residues: Aldo-keto reductase Mvan_2161 (279 aa).

Tyr54 acts as the Proton donor in catalysis. NADPH is bound by residues Leu194, Val196, Ile232, Arg234, Ser235, Arg240, Ser243, Asn244, and Arg270.

Belongs to the aldo/keto reductase family.

The chain is Aldo-keto reductase Mvan_2161 from Mycolicibacterium vanbaalenii (strain DSM 7251 / JCM 13017 / BCRC 16820 / KCTC 9966 / NRRL B-24157 / PYR-1) (Mycobacterium vanbaalenii).